The chain runs to 141 residues: Large ribosomal subunit protein uL11 (141 aa).

It belongs to the universal ribosomal protein uL11 family. As to quaternary structure, part of the ribosomal stalk of the 50S ribosomal subunit. Interacts with L10 and the large rRNA to form the base of the stalk. L10 forms an elongated spine to which L12 dimers bind in a sequential fashion forming a multimeric L10(L12)X complex. In terms of processing, one or more lysine residues are methylated.

In terms of biological role, forms part of the ribosomal stalk which helps the ribosome interact with GTP-bound translation factors. This Chlorobium phaeovibrioides (strain DSM 265 / 1930) (Prosthecochloris vibrioformis (strain DSM 265)) protein is Large ribosomal subunit protein uL11.